The chain runs to 536 residues: Arylsulfatase K (536 aa).

The signal sequence occupies residues 1 to 22 (MLLLWVSVVAALALAVLAPGAG). Positions 40 and 80 each coordinate Ca(2+). The Nucleophile role is filled by cysteine 80. Residue cysteine 80 is modified to 3-oxoalanine (Cys). N-linked (GlcNAc...) asparagine glycosylation occurs at asparagine 108. Lysine 128 is a binding site for substrate. N-linked (GlcNAc...) asparagine glycans are attached at residues asparagine 166 and asparagine 193. Histidine 251 is a substrate binding site. An N-linked (GlcNAc...) asparagine glycan is attached at asparagine 262. Ca(2+)-binding residues include aspartate 313 and histidine 314. Asparagine 375, asparagine 413, and asparagine 498 each carry an N-linked (GlcNAc...) asparagine glycan.

This sequence belongs to the sulfatase family. Requires Ca(2+) as cofactor. Post-translationally, the conversion to 3-oxoalanine (also known as C-formylglycine, FGly), of a serine or cysteine residue in prokaryotes and of a cysteine residue in eukaryotes, is critical for catalytic activity. The 75-kDa precursor undergoes proteolytic processing to yield a 23 kDa form. In terms of processing, N-glycosylated with both high mannose and complex type sugars. Expressed at high levels in the placenta and pancreas. Expressed at intermediate levels in the lung, brain, heart, liver and kidney and at low levels in the muscle.

The protein localises to the secreted. It localises to the lysosome. It catalyses the reaction an aryl sulfate + H2O = a phenol + sulfate + H(+). The catalysed reaction is Hydrolysis of the 2-sulfate groups of the 2-O-sulfo-D-glucuronate residues of chondroitin sulfate, heparin and heparitin sulfate.. Its function is as follows. Catalyzes the hydrolysis of pseudosubstrates such as p-nitrocatechol sulfate and p-nitrophenyl sulfate. Catalyzes the hydrolysis of the 2-sulfate groups of the 2-O-sulfo-D-glucuronate residues of chondroitin sulfate, heparin and heparitin sulfate. Acts selectively on 2-sulfoglucuronate and lacks activity against 2-sulfoiduronate. This is Arylsulfatase K (ARSK) from Homo sapiens (Human).